Consider the following 243-residue polypeptide: UPF0246 protein spyM18_2163 (243 aa).

Belongs to the UPF0246 family.

In Streptococcus pyogenes serotype M18 (strain MGAS8232), this protein is UPF0246 protein spyM18_2163.